The following is a 443-amino-acid chain: MKQLFTQHIKRLQQVVQTILETNFLSGLWIHSGTARYHFLDDQTAPFKINPHFNYLFPFPTAENCWLFLDGKNKPTVYFYAPNDYWHTPPVAPTDAFFADEFQWVILQDSQEIAKFIQNPTACTFIGEDENLAESLGFNQINPQKVLNQFHFERSIKSEFEIEAIYQAQFAALKGHQAAKQAFFEGKSEFEINLAYLKASQQSDLNVPYGNIVAINQHSAILHYTQLDYAPNPQQQSFLIDAGATIHGYASDITRTYAADPNSEFAAMIKQMEQYKYRIIDQLTVGVNYLSYHTQMQQWIAEMLYEYDFVRLTPEQIFEEGISRAFLPHGLGHLLGLQVHDAAGFQQNPRGTRKSPPEVYPSLRCTRDLAENMVLTIEPGFYFIDMLLNPLQNSPLARHINWQKIAEFKQFGGIRTEDNIVMRSQGAENLTQKAEIELQLSDH.

The Mn(2+) site is built by Asp241, Asp252, His333, Glu378, and Glu417.

The protein belongs to the peptidase M24B family. Bacterial-type prolidase subfamily. It depends on Mn(2+) as a cofactor.

The enzyme catalyses Xaa-L-Pro dipeptide + H2O = an L-alpha-amino acid + L-proline. Splits dipeptides with a prolyl residue in the C-terminal position. This is Xaa-Pro dipeptidase from Actinobacillus pleuropneumoniae serotype 5b (strain L20).